Reading from the N-terminus, the 115-residue chain is Large ribosomal subunit protein bL20 (115 aa).

It belongs to the bacterial ribosomal protein bL20 family.

Functionally, binds directly to 23S ribosomal RNA and is necessary for the in vitro assembly process of the 50S ribosomal subunit. It is not involved in the protein synthesizing functions of that subunit. This is Large ribosomal subunit protein bL20 from Prochlorococcus marinus (strain AS9601).